Here is a 328-residue protein sequence, read N- to C-terminus: Stress response kinase A (328 aa).

Asp-201 (proton acceptor) is an active-site residue. Residues Asn-206 and Asp-217 each contribute to the Mg(2+) site. The active site involves Asp-217.

The protein belongs to the SrkA/RdoA protein kinase family. In terms of assembly, monomer. Requires Mg(2+) as cofactor.

Its subcellular location is the cytoplasm. The catalysed reaction is L-seryl-[protein] + ATP = O-phospho-L-seryl-[protein] + ADP + H(+). It carries out the reaction L-threonyl-[protein] + ATP = O-phospho-L-threonyl-[protein] + ADP + H(+). In terms of biological role, a protein kinase that phosphorylates Ser and Thr residues. Probably acts to suppress the effects of stress linked to accumulation of reactive oxygen species. Probably involved in the extracytoplasmic stress response. In Salmonella choleraesuis (strain SC-B67), this protein is Stress response kinase A.